Consider the following 452-residue polypeptide: MRECISVHIGQAGVQMGNACWELYCLEHGIQPDGQMPSDKTIGGGDDSFNTFFSETGAGKHVPRAVFVDLEPTVVDEVRTGTYRQLFHPEQLITGKEDAANNYARGHYTVGKEIIDLVLDRIRKLADQCTGLQGFLIFHSFGGGTGSGFSSLLMERLSVDYGKKSKLEFAIYPAPQISTAVVEPYNSILTTHTTLEHSDCAFMVDNEAIYDICRRNLDIERPTYTNLNRLIGQIVSSITASLRFDGALNVDLTEFQTNLVPYPRIHFPLATYAPVISAEKAYHEQLTVAEITNACFEPANQMVKCDPRHGKYMSCCMLYRGDVVPKDVNAAIATIKTKRTIQFVDWCPTGFKVGINYQPPTVVPGGDLAKVQRAVCMLSNTTAIAEAWARLDHKFDLMYAKRAFVHWYVGEGMEEGEFSEAREDLAALEKDYEEVGVDSVEGEGEEEGGEEY.

GTP is bound at residue Gln-11. An N6-acetyllysine modification is found at Lys-40. GTP contacts are provided by Glu-71, Ser-140, Gly-144, Thr-145, Thr-179, Asn-206, and Asn-228. A Mg(2+)-binding site is contributed by Glu-71. The active site involves Glu-254. Residues 432–452 form a disordered region; it reads YEEVGVDSVEGEGEEEGGEEY.

The protein belongs to the tubulin family. In terms of assembly, dimer of alpha and beta chains. A typical microtubule is a hollow water-filled tube with an outer diameter of 25 nm and an inner diameter of 15 nM. Alpha-beta heterodimers associate head-to-tail to form protofilaments running lengthwise along the microtubule wall with the beta-tubulin subunit facing the microtubule plus end conferring a structural polarity. Microtubules usually have 13 protofilaments but different protofilament numbers can be found in some organisms and specialized cells. The cofactor is Mg(2+). In terms of processing, undergoes a tyrosination/detyrosination cycle, the cyclic removal and re-addition of a C-terminal tyrosine residue by the enzymes tubulin tyrosine carboxypeptidase (TTCP) and tubulin tyrosine ligase (TTL), respectively. Acetylation of alpha chains at Lys-40 stabilizes microtubules and affects affinity and processivity of microtubule motors. This modification has a role in multiple cellular functions, ranging from cell motility, cell cycle progression or cell differentiation to intracellular trafficking and signaling.

It localises to the cytoplasm. Its subcellular location is the cytoskeleton. The catalysed reaction is GTP + H2O = GDP + phosphate + H(+). Tubulin is the major constituent of microtubules, a cylinder consisting of laterally associated linear protofilaments composed of alpha- and beta-tubulin heterodimers. Microtubules grow by the addition of GTP-tubulin dimers to the microtubule end, where a stabilizing cap forms. Below the cap, tubulin dimers are in GDP-bound state, owing to GTPase activity of alpha-tubulin. In Patella vulgata (Common limpet), this protein is Tubulin alpha-2/alpha-4 chain (TUB2).